The sequence spans 319 residues: Pyrroline-5-carboxylate reductase 1, mitochondrial (319 aa).

S2 carries the post-translational modification N-acetylserine. NADP(+) is bound by residues 6-11 (IGAGQL) and S34. 9 residues coordinate NADPH: A8, Q10, L11, S34, D36, N56, V70, K71, and A97. NADP(+) is bound by residues N56, 69–72 (AVKP), and 95–97 (CAA). Residue E164 coordinates L-proline. N230 contacts NADPH. Positions 237 and 238 each coordinate L-proline. A phosphoserine mark is found at S278 and S301. Residues 294-319 (SPAGTALSPSGHTKLLPRSLAPAGKD) form a disordered region.

This sequence belongs to the pyrroline-5-carboxylate reductase family. In terms of assembly, homodecamer; composed of 5 homodimers. Interacts with LTO1.

The protein localises to the mitochondrion. The catalysed reaction is L-proline + NADP(+) = (S)-1-pyrroline-5-carboxylate + NADPH + 2 H(+). It catalyses the reaction L-proline + NAD(+) = (S)-1-pyrroline-5-carboxylate + NADH + 2 H(+). Its pathway is amino-acid biosynthesis; L-proline biosynthesis; L-proline from L-glutamate 5-semialdehyde: step 1/1. Its activity is regulated as follows. Subject to competitive inhibition by the reaction product proline. Subject to competitive inhibition by stearoyl coenzyme A. Its function is as follows. Oxidoreductase that catalyzes the last step in proline biosynthesis, which corresponds to the reduction of pyrroline-5-carboxylate to L-proline using NAD(P)H. At physiologic concentrations, has higher specific activity in the presence of NADH. Involved in the cellular response to oxidative stress. In Homo sapiens (Human), this protein is Pyrroline-5-carboxylate reductase 1, mitochondrial.